The sequence spans 1071 residues: ATP-dependent helicase/deoxyribonuclease subunit B (1071 aa).

This sequence belongs to the helicase family. AddB/RexB type 2 subfamily. As to quaternary structure, heterodimer of AddA and RexB. Mg(2+) is required as a cofactor.

Its function is as follows. The heterodimer acts as both an ATP-dependent DNA helicase and an ATP-dependent, dual-direction single-stranded exonuclease. Recognizes the chi site generating a DNA molecule suitable for the initiation of homologous recombination. This subunit has 5' -&gt; 3' nuclease activity but not helicase activity. In Streptococcus pyogenes serotype M49 (strain NZ131), this protein is ATP-dependent helicase/deoxyribonuclease subunit B.